The chain runs to 76 residues: uncharacterized protein (76 aa).

The protein to M.jannaschii MJ0857 N-terminal region.

This is an uncharacterized protein from Methanocaldococcus jannaschii (strain ATCC 43067 / DSM 2661 / JAL-1 / JCM 10045 / NBRC 100440) (Methanococcus jannaschii).